The chain runs to 744 residues: Kinesin-like protein KIF2A (744 aa).

Residues 66–186 (LVPDEEIEPS…QQELREKRAQ (121 aa)) are disordered. Ser-75 is subject to Phosphoserine. A phosphothreonine mark is found at Thr-78 and Thr-97. Ser-100 is modified (phosphoserine). Residue Lys-102 is modified to N6-acetyllysine. The segment covering 123 to 140 (FPEQSSSAQQNGSVSDIS) has biased composition (polar residues). Ser-135 and Ser-140 each carry phosphoserine. Positions 154-187 (RRKSNCVKEVEKLQEKREKRRLQQQELREKRAQD) form a coiled coil. Residues 159–186 (CVKEVEKLQEKREKRRLQQQELREKRAQ) are compositionally biased toward basic and acidic residues. A Kinesin motor domain is found at 223-553 (RICVCVRKRP…LRYANRVKEF (331 aa)). Position 313–320 (313–320 (GQTGSGKT)) interacts with ATP. Positions 698–737 (ATQLEAILEQKIDILTELRDKVKSFRAALQEEEQASKQIN) form a coiled coil.

It belongs to the TRAFAC class myosin-kinesin ATPase superfamily. Kinesin family. MCAK/KIF2 subfamily. As to quaternary structure, interacts with AURKA and PLK1. Interacts with PSRC1. Interacts with MCRS1; the interaction enhances recruitment of KIF2A to the minus ends of spindle microtubules which promotes chromosome alignment.

The protein localises to the cytoplasm. It is found in the cytoskeleton. The protein resides in the microtubule organizing center. It localises to the centrosome. Its subcellular location is the spindle pole. The protein localises to the spindle. Its function is as follows. Plus end-directed microtubule-dependent motor required for normal brain development. May regulate microtubule dynamics during axonal growth. Required for normal progression through mitosis. Required for normal congress of chromosomes at the metaphase plate. Required for normal spindle dynamics during mitosis. Promotes spindle turnover. Implicated in formation of bipolar mitotic spindles. Has microtubule depolymerization activity. The protein is Kinesin-like protein KIF2A of Pongo abelii (Sumatran orangutan).